Reading from the N-terminus, the 463-residue chain is Elongation factor 1-alpha 2 (463 aa).

Residue G2 is modified to N,N,N-trimethylglycine. A tr-type G domain is found at 5–242 (KTHINIVVIG…DTILPPTRPT (238 aa)). The segment at 14 to 21 (GHVDSGKS) is G1. Positions 17, 18, 19, 20, 21, and 22 each coordinate GTP. A Mg(2+)-binding site is contributed by D17. At K36 the chain carries N6,N6,N6-trimethyllysine; alternate. N6,N6-dimethyllysine; alternate is present on K36. K36 is modified (N6-methyllysine; alternate). K55 is subject to N6,N6,N6-trimethyllysine. K55 carries the post-translational modification N6,N6-dimethyllysine. The G2 stretch occupies residues 70–74 (GITID). Position 79 is an N6,N6,N6-trimethyllysine (K79). The tract at residues 91 to 94 (DAPG) is G3. Residues N153, K154, and D156 each contribute to the GTP site. A G4 region spans residues 153–156 (NKMD). At S163 the chain carries Phosphoserine. N6,N6-dimethyllysine; alternate is present on K165. K165 bears the N6-methyllysine; alternate mark. K165 carries the N6,N6,N6-trimethyllysine; alternate; by EEF1AKMT3 modification. K179 carries the post-translational modification N6-acetyllysine. GTP-binding residues include S194, G195, and W196. Positions 194 to 196 (SGW) are G5. A Phosphoserine modification is found at S224. T239 carries the post-translational modification Phosphothreonine. E301 and E374 each carry 5-glutamyl glycerylphosphorylethanolamine. K439 carries the post-translational modification N6-acetyllysine. Positions 444–463 (KSGGAGKVTKSAQKAQKAGK) are disordered.

This sequence belongs to the TRAFAC class translation factor GTPase superfamily. Classic translation factor GTPase family. EF-Tu/EF-1A subfamily. Homodimer; arranged in a 'head to tail' dimer configuration. Trimethylated at Lys-165 by EEF1AKMT3. Mono-, di-, and trimethylated at Lys-36 by EEF1AKMT4; trimethylated form is predominant. Methylation by EEF1AKMT4 contributes to the fine-tuning of translation rates for a subset of tRNAs. Trimethylated at the N-terminus and dimethylated at Lys-55 by METTL13.

The protein resides in the endoplasmic reticulum membrane. The enzyme catalyses GTP + H2O = GDP + phosphate + H(+). Functionally, translation elongation factor that catalyzes the GTP-dependent binding of aminoacyl-tRNA (aa-tRNA) to the A-site of ribosomes during the elongation phase of protein synthesis. Base pairing between the mRNA codon and the aa-tRNA anticodon promotes GTP hydrolysis, releasing the aa-tRNA from EEF1A1 and allowing its accommodation into the ribosome. The growing protein chain is subsequently transferred from the P-site peptidyl tRNA to the A-site aa-tRNA, extending it by one amino acid through ribosome-catalyzed peptide bond formation. The protein is Elongation factor 1-alpha 2 (Eef1a2) of Rattus norvegicus (Rat).